A 75-amino-acid chain; its full sequence is Small ribosomal subunit protein bS18 (75 aa).

Belongs to the bacterial ribosomal protein bS18 family. Part of the 30S ribosomal subunit. Forms a tight heterodimer with protein bS6.

In terms of biological role, binds as a heterodimer with protein bS6 to the central domain of the 16S rRNA, where it helps stabilize the platform of the 30S subunit. The protein is Small ribosomal subunit protein bS18 of Laribacter hongkongensis (strain HLHK9).